We begin with the raw amino-acid sequence, 247 residues long: Cytochrome c oxidase subunit 2 (247 aa).

Topologically, residues 1–38 (MREMMMNNMLNDVPTPWAMYFQDSATPNMEGMMELHNN) are mitochondrial intermembrane. Residues 39 to 55 (VLFYLCVMLGFVTYMLY) traverse the membrane as a helical segment. Residues 56-86 (NVMTVYNKSAMAYKYMNHGQFMEMMWTTFPA) are Mitochondrial matrix-facing. Residues 87 to 103 (MMLLMMAFPSFMLLYMC) form a helical membrane-spanning segment. At 104-247 (DEVMAPAMTI…VDFLAWIDEQ (144 aa)) the chain is on the mitochondrial intermembrane side. Histidine 182, cysteine 217, glutamate 219, cysteine 221, histidine 225, and methionine 228 together coordinate Cu cation. Glutamate 219 contributes to the Mg(2+) binding site.

This sequence belongs to the cytochrome c oxidase subunit 2 family. Component of the cytochrome c oxidase (complex IV, CIV), a multisubunit enzyme composed of a catalytic core of 3 subunits and several supernumerary subunits. The complex exists as a monomer or a dimer and forms supercomplexes (SCs) in the inner mitochondrial membrane with ubiquinol-cytochrome c oxidoreductase (cytochrome b-c1 complex, complex III, CIII). It depends on Cu cation as a cofactor.

Its subcellular location is the mitochondrion inner membrane. The catalysed reaction is 4 Fe(II)-[cytochrome c] + O2 + 8 H(+)(in) = 4 Fe(III)-[cytochrome c] + 2 H2O + 4 H(+)(out). Component of the cytochrome c oxidase, the last enzyme in the mitochondrial electron transport chain which drives oxidative phosphorylation. The respiratory chain contains 3 multisubunit complexes succinate dehydrogenase (complex II, CII), ubiquinol-cytochrome c oxidoreductase (cytochrome b-c1 complex, complex III, CIII) and cytochrome c oxidase (complex IV, CIV), that cooperate to transfer electrons derived from NADH and succinate to molecular oxygen, creating an electrochemical gradient over the inner membrane that drives transmembrane transport and the ATP synthase. Cytochrome c oxidase is the component of the respiratory chain that catalyzes the reduction of oxygen to water. Electrons originating from reduced cytochrome c in the intermembrane space (IMS) are transferred via the dinuclear copper A center (CU(A)) of subunit 2 and heme A of subunit 1 to the active site in subunit 1, a binuclear center (BNC) formed by heme A3 and copper B (CU(B)). The BNC reduces molecular oxygen to 2 water molecules using 4 electrons from cytochrome c in the IMS and 4 protons from the mitochondrial matrix. This is Cytochrome c oxidase subunit 2 (COX2) from Eeniella nana (Yeast).